Here is a 321-residue protein sequence, read N- to C-terminus: Glutaminase (321 aa).

Residues Ser-69, Asn-120, Glu-165, Asn-172, Tyr-196, Tyr-248, and Val-266 each coordinate substrate.

Belongs to the glutaminase family. In terms of assembly, homotetramer.

It catalyses the reaction L-glutamine + H2O = L-glutamate + NH4(+). The chain is Glutaminase from Bacteroides thetaiotaomicron (strain ATCC 29148 / DSM 2079 / JCM 5827 / CCUG 10774 / NCTC 10582 / VPI-5482 / E50).